Here is a 515-residue protein sequence, read N- to C-terminus: ATP synthase subunit alpha (515 aa).

171–178 (GDRQTGKT) provides a ligand contact to ATP.

The protein belongs to the ATPase alpha/beta chains family. As to quaternary structure, F-type ATPases have 2 components, CF(1) - the catalytic core - and CF(0) - the membrane proton channel. CF(1) has five subunits: alpha(3), beta(3), gamma(1), delta(1), epsilon(1). CF(0) has three main subunits: a(1), b(2) and c(9-12). The alpha and beta chains form an alternating ring which encloses part of the gamma chain. CF(1) is attached to CF(0) by a central stalk formed by the gamma and epsilon chains, while a peripheral stalk is formed by the delta and b chains.

Its subcellular location is the cell inner membrane. The enzyme catalyses ATP + H2O + 4 H(+)(in) = ADP + phosphate + 5 H(+)(out). Produces ATP from ADP in the presence of a proton gradient across the membrane. The alpha chain is a regulatory subunit. The protein is ATP synthase subunit alpha of Xanthomonas axonopodis pv. citri (strain 306).